The following is a 452-amino-acid chain: Golgi reassembly-stacking protein 2 (452 aa).

Gly2 is lipidated: N-myristoyl glycine. PDZ GRASP-type domains follow at residues 15-105 (EGYH…FCSF) and 111-199 (NVWH…YGYL). The interval 15–215 (EGYHVLRVQE…PFEEGKKISL (201 aa)) is GRASP. Residues Arg30 and Arg47 each carry the dimethylated arginine modification. An important for membrane binding region spans residues 194-199 (IGYGYL). Residue Ser214 is modified to Phosphoserine. A phosphothreonine mark is found at Thr222 and Thr225. Residues 372–424 (PESSSAASSGELLSSLPPTSNAPSDPATTTAKADAASSLTVDVTPPTAKAPTT) show a composition bias toward low complexity. The tract at residues 372 to 452 (PESSSAASSG…AVDANASESP (81 aa)) is disordered. The residue at position 409 (Ser409) is a Phosphoserine. Phosphothreonine occurs at positions 415 and 433. Phosphoserine is present on residues Ser436, Ser441, Ser449, and Ser451.

The protein belongs to the GORASP family. In terms of assembly, homodimer. Homooligomer. ER stress induces phosphorylation-dependent monomerization. Interacts with BLZF1/Golgin 45. Identified in a complex with RAB2 and GORASP2. Interacts with JAM2 and JAM3. Interacts with members of the p24 cargo receptors. Interacts with CNIH1 and the cytoplasmic domain of transmembrane TGFA, prior its transit in the trans-Golgi. Interacts with KCTD5. Interacts with TMED2 and TMED3. Interacts with SEC16A in response to ER stress. Interacts (via PDZ GRASP-type 1 domain) with core-glycosylated CFTR in response to ER stress. Post-translationally, myristoylated. Myristoylation is essential for the Golgi targeting. Palmitoylated. In terms of processing, phosphorylated in mitotic cells. ER stress-induced phosphorylation at Ser-441 induces monomerization and subsequent relocalization from Golgi to ER which is essential for mediating unconventional (ER/Golgi-independent) trafficking of CFTR to the cell membrane.

The protein resides in the golgi apparatus membrane. It localises to the endoplasmic reticulum membrane. The protein localises to the golgi apparatus. In terms of biological role, key structural protein of the Golgi apparatus. The membrane cisternae of the Golgi apparatus adhere to each other to form stacks, which are aligned side by side to form the Golgi ribbon. Acting in concert with GORASP1/GRASP65, is required for the formation and maintenance of the Golgi ribbon, and may be dispensable for the formation of stacks. However, other studies suggest that GORASP2 plays a role in the assembly and membrane stacking of the Golgi cisternae, and in the process by which Golgi stacks reform after breakdown during mitosis and meiosis. May regulate the intracellular transport and presentation of a defined set of transmembrane proteins, such as transmembrane TGFA. Required for normal acrosome formation during spermiogenesis and normal male fertility, probably by promoting colocalization of JAM2 and JAM3 at contact sites between germ cells and Sertoli cells. Mediates ER stress-induced unconventional (ER/Golgi-independent) trafficking of core-glycosylated CFTR to cell membrane. This Homo sapiens (Human) protein is Golgi reassembly-stacking protein 2 (GORASP2).